The primary structure comprises 127 residues: Small ribosomal subunit protein uS11 (127 aa).

This sequence belongs to the universal ribosomal protein uS11 family. In terms of assembly, part of the 30S ribosomal subunit.

Its function is as follows. Located on the platform of the 30S subunit. The chain is Small ribosomal subunit protein uS11 from Halobacterium salinarum (strain ATCC 700922 / JCM 11081 / NRC-1) (Halobacterium halobium).